The following is a 138-amino-acid chain: Large ribosomal subunit protein uL16 (138 aa).

A compositionally biased stretch (basic residues) spans 1–13 (MLQPARRKYRKEQ). Positions 1–22 (MLQPARRKYRKEQKGRNTGIAT) are disordered.

The protein belongs to the universal ribosomal protein uL16 family. Part of the 50S ribosomal subunit.

Binds 23S rRNA and is also seen to make contacts with the A and possibly P site tRNAs. The polypeptide is Large ribosomal subunit protein uL16 (Delftia acidovorans (strain DSM 14801 / SPH-1)).